The following is a 389-amino-acid chain: Acyl-[acyl-carrier-protein] dehydrogenase MbtN (389 aa).

This sequence belongs to the acyl-CoA dehydrogenase family. FAD is required as a cofactor.

Its pathway is siderophore biosynthesis; mycobactin biosynthesis. In terms of biological role, catalyzes the dehydrogenation at the alpha-beta position of ACP-bound acyl chains. This results in the introduction of a double bond in the lipidic chain, which is further transferred to the epsilon-amino group of lysine residue in the mycobactin core by MbtK. This is Acyl-[acyl-carrier-protein] dehydrogenase MbtN (mbtN) from Mycobacterium sp. (strain MCS).